Here is a 310-residue protein sequence, read N- to C-terminus: Carbamate kinase (310 aa).

The protein belongs to the carbamate kinase family. Homodimer.

The protein resides in the cytoplasm. The enzyme catalyses hydrogencarbonate + NH4(+) + ATP = carbamoyl phosphate + ADP + H2O + H(+). The protein operates within amino-acid degradation; L-arginine degradation via ADI pathway. This is Carbamate kinase from Haemophilus influenzae (strain ATCC 51907 / DSM 11121 / KW20 / Rd).